We begin with the raw amino-acid sequence, 438 residues long: V-type ATP synthase beta chain (438 aa).

Belongs to the ATPase alpha/beta chains family.

In terms of biological role, produces ATP from ADP in the presence of a proton gradient across the membrane. The V-type beta chain is a regulatory subunit. This chain is V-type ATP synthase beta chain (atpB), found in Chlamydia pneumoniae (Chlamydophila pneumoniae).